Reading from the N-terminus, the 249-residue chain is Probable transcriptional regulatory protein LIC_12886 (249 aa).

It belongs to the TACO1 family.

It is found in the cytoplasm. The protein is Probable transcriptional regulatory protein LIC_12886 of Leptospira interrogans serogroup Icterohaemorrhagiae serovar copenhageni (strain Fiocruz L1-130).